A 299-amino-acid chain; its full sequence is Virginiamycin B lyase (299 aa).

Residue His-229 participates in substrate binding. Glu-269 is a binding site for Mg(2+). His-271 serves as the catalytic Proton acceptor. Glu-286 serves as a coordination point for Mg(2+).

Belongs to the Vgb family. Monomer. Requires Mg(2+) as cofactor.

Its function is as follows. Inactivates the type B streptogramin antibiotics by linearizing the lactone ring at the ester linkage, generating a free phenylglycine carboxylate and converting the threonyl moiety into 2-amino-butenoic acid. The protein is Virginiamycin B lyase (vgb) of Bordetella pertussis (strain Tohama I / ATCC BAA-589 / NCTC 13251).